The following is a 427-amino-acid chain: Endothelin-1 receptor (427 aa).

The first 20 residues, 1-20 (METLCLRASFWLALVGCVIS), serve as a signal peptide directing secretion. Over 21–80 (DNPERYSTNLSNHVDDFTTFRGTELSFLVTTHQPTNLVLPSNGSMHNYCPQQTKITSAFK) the chain is Extracellular. Residues Asn29 and Asn62 are each glycosylated (N-linked (GlcNAc...) asparagine). Residues 81–102 (YINTVISCTIFIVGMVGNATLL) traverse the membrane as a helical segment. The Cytoplasmic portion of the chain corresponds to 103-112 (RIIYQNKCMR). A helical membrane pass occupies residues 113 to 132 (NGPNALIASLALGDLIYVVI). Residues 133 to 159 (DLPINVFKLLAGRWPFDHNDFGVFLCK) are Extracellular-facing. Cys158 and Cys239 form a disulfide bridge. Residues 160–181 (LFPFLQKSSVGITVLNLCALSV) form a helical membrane-spanning segment. At 182 to 205 (DRYRAVASWSRVQGIGIPLVTAIE) the chain is on the cytoplasmic side. The chain crosses the membrane as a helical span at residues 206-229 (IVSIWILSFILAIPEAIGFVMVPF). Topologically, residues 230–256 (EYRGEQHKTCMLNATSKFMEFYQDVKD) are extracellular. The helical transmembrane segment at 257–278 (WWLFGFYFCMPLVCTAIFYTLM) threads the bilayer. Topologically, residues 279 to 306 (TCEMLNRRNGSLRIALSEHLKQRREVAK) are cytoplasmic. A helical transmembrane segment spans residues 307–328 (TVFCLVVIFALCWFPLHLSRIL). At 329–347 (KKTVYNEMDKNRCELLSFL) the chain is on the extracellular side. Residues 348–372 (LLMDYIGINLATMNSCINPIALYFV) form a helical membrane-spanning segment. At 373 to 427 (SKKFKNCFQSCLCCCCYQSKSLMTSVPMNGTSIQWKNHDQNNHNTDRSSHKDSMN) the chain is on the cytoplasmic side. The interval 406–427 (QWKNHDQNNHNTDRSSHKDSMN) is disordered. Basic and acidic residues predominate over residues 408–427 (KNHDQNNHNTDRSSHKDSMN). Ser425 carries the post-translational modification Phosphoserine.

It belongs to the G-protein coupled receptor 1 family. Endothelin receptor subfamily. EDNRA sub-subfamily. In terms of assembly, interacts with HDAC7 and KAT5. As to expression, isoform 1, isoform 3 and isoform 4 are expressed in a variety of tissues, with highest levels in the aorta and cerebellum, followed by lung, atrium and cerebral cortex, lower levels in the placenta, kidney, adrenal gland, duodenum, colon, ventricle and liver but no expression in umbilical vein endothelial cells. Within the placenta, isoform 1, isoform 2, isoform 3 and isoform 4 are expressed in the villi and stem villi vessels.

It localises to the cell membrane. In terms of biological role, receptor for endothelin-1. Mediates its action by association with G proteins that activate a phosphatidylinositol-calcium second messenger system. The rank order of binding affinities for ET-A is: ET1 &gt; ET2 &gt;&gt; ET3. This is Endothelin-1 receptor from Homo sapiens (Human).